Here is a 293-residue protein sequence, read N- to C-terminus: Ribosomal protein L11 methyltransferase (293 aa).

4 residues coordinate S-adenosyl-L-methionine: T145, G166, D188, and N230.

Belongs to the methyltransferase superfamily. PrmA family.

The protein localises to the cytoplasm. It carries out the reaction L-lysyl-[protein] + 3 S-adenosyl-L-methionine = N(6),N(6),N(6)-trimethyl-L-lysyl-[protein] + 3 S-adenosyl-L-homocysteine + 3 H(+). Its function is as follows. Methylates ribosomal protein L11. The protein is Ribosomal protein L11 methyltransferase of Sodalis glossinidius (strain morsitans).